Here is a 256-residue protein sequence, read N- to C-terminus: Large ribosomal subunit protein eL8A (256 aa).

The segment at 1–37 (MAPGKKVAPAPFGAKSTKSNKTRNPLTHSTPKNFGIG) is disordered. Residues 16-32 (STKSNKTRNPLTHSTPK) show a composition bias toward polar residues.

This sequence belongs to the eukaryotic ribosomal protein eL8 family. In terms of assembly, component of the large ribosomal subunit (LSU). Mature yeast ribosomes consist of a small (40S) and a large (60S) subunit. The 40S small subunit contains 1 molecule of ribosomal RNA (18S rRNA) and 33 different proteins (encoded by 57 genes). The large 60S subunit contains 3 rRNA molecules (25S, 5.8S and 5S rRNA) and 46 different proteins (encoded by 81 genes).

The protein localises to the cytoplasm. Its function is as follows. Component of the ribosome, a large ribonucleoprotein complex responsible for the synthesis of proteins in the cell. The small ribosomal subunit (SSU) binds messenger RNAs (mRNAs) and translates the encoded message by selecting cognate aminoacyl-transfer RNA (tRNA) molecules. The large subunit (LSU) contains the ribosomal catalytic site termed the peptidyl transferase center (PTC), which catalyzes the formation of peptide bonds, thereby polymerizing the amino acids delivered by tRNAs into a polypeptide chain. The nascent polypeptides leave the ribosome through a tunnel in the LSU and interact with protein factors that function in enzymatic processing, targeting, and the membrane insertion of nascent chains at the exit of the ribosomal tunnel. This is Large ribosomal subunit protein eL8A from Saccharomyces cerevisiae (strain ATCC 204508 / S288c) (Baker's yeast).